Consider the following 967-residue polypeptide: Leucine--tRNA ligase (967 aa).

The short motif at P43–H53 is the 'HIGH' region element. Residues K650 to S654 carry the 'KMSKS' region motif. K653 lines the ATP pocket.

It belongs to the class-I aminoacyl-tRNA synthetase family.

Its subcellular location is the cytoplasm. The enzyme catalyses tRNA(Leu) + L-leucine + ATP = L-leucyl-tRNA(Leu) + AMP + diphosphate. In Thermococcus kodakarensis (strain ATCC BAA-918 / JCM 12380 / KOD1) (Pyrococcus kodakaraensis (strain KOD1)), this protein is Leucine--tRNA ligase.